We begin with the raw amino-acid sequence, 339 residues long: 5-dehydro-2-deoxygluconokinase (339 aa).

The protein belongs to the carbohydrate kinase PfkB family.

The enzyme catalyses 5-dehydro-2-deoxy-D-gluconate + ATP = 6-phospho-5-dehydro-2-deoxy-D-gluconate + ADP + H(+). It participates in polyol metabolism; myo-inositol degradation into acetyl-CoA; acetyl-CoA from myo-inositol: step 5/7. Its function is as follows. Catalyzes the phosphorylation of 5-dehydro-2-deoxy-D-gluconate (2-deoxy-5-keto-D-gluconate or DKG) to 6-phospho-5-dehydro-2-deoxy-D-gluconate (DKGP). The chain is 5-dehydro-2-deoxygluconokinase from Clostridium tetani (strain Massachusetts / E88).